Here is a 250-residue protein sequence, read N- to C-terminus: MADS-box protein J2 (250 aa).

In terms of domain architecture, MADS-box spans 1 to 61; it reads MGRGRVELKR…GKLYEFSSAS (61 aa). Positions 87–177 constitute a K-box domain; the sequence is TQMNYNEYVR…KNKLEESAAR (91 aa).

Its subcellular location is the nucleus. In terms of biological role, MADS-box transcription factor that acts redundantly with EJ2 to control meristem maturation and inflorescence architecture. This chain is MADS-box protein J2, found in Solanum lycopersicum (Tomato).